A 359-amino-acid polypeptide reads, in one-letter code: 3-dehydroquinate synthase (359 aa).

NAD(+)-binding positions include 69 to 74, 103 to 107, 127 to 128, K140, K149, and 167 to 170; these read DGEAHK, GVIGD, TT, and TLDT. 3 residues coordinate Zn(2+): E182, H245, and H262.

Belongs to the sugar phosphate cyclases superfamily. Dehydroquinate synthase family. Requires Co(2+) as cofactor. It depends on Zn(2+) as a cofactor. NAD(+) is required as a cofactor.

Its subcellular location is the cytoplasm. It catalyses the reaction 7-phospho-2-dehydro-3-deoxy-D-arabino-heptonate = 3-dehydroquinate + phosphate. It participates in metabolic intermediate biosynthesis; chorismate biosynthesis; chorismate from D-erythrose 4-phosphate and phosphoenolpyruvate: step 2/7. In terms of biological role, catalyzes the conversion of 3-deoxy-D-arabino-heptulosonate 7-phosphate (DAHP) to dehydroquinate (DHQ). The protein is 3-dehydroquinate synthase of Methylococcus capsulatus (strain ATCC 33009 / NCIMB 11132 / Bath).